A 742-amino-acid chain; its full sequence is Feeding circuit activating peptides (742 aa).

Residues 1–22 (MTFAASFRALLCVLFCAALVHC) form the signal peptide. A propeptide spanning residues 23 to 98 (KTRTKRYVPH…YGALADRDVD (76 aa)) is cleaved from the precursor. Residues 117 to 131 (GSLDAIPQDTDASSD) constitute a propeptide, connecting peptide. 20 consecutive propeptides follow at residues 164–168 (GSGAE), 202–220 (RGTG…PWGS), 236–253 (DTEL…TEVN), 271–275 (SGEAG), 293–297 (ADDQG), 315–321 (FDNSAGE), 339–341 (AGD), 359–366 (FDNDISGQ), 384–388 (SDQDN), 406–410 (ADDDG), 428–432 (ADEDD), 450–454 (GDEDD), 472–476 (ADEDD), 494–498 (SDEDD), 516–520 (SDEDD), 538–542 (ADEDD), 560–564 (NSPGL), 582–592 (NNEYYSGAENE), 610–614 (DQPGE), and 647–742 (NSAD…AGQM).

Expressed in pleural, pedal, abdominal, buccal and cerebral ganglia.

It localises to the secreted. Functionally, initiates organized rhythmic motor output of feeding circuit. This Aplysia californica (California sea hare) protein is Feeding circuit activating peptides.